A 276-amino-acid chain; its full sequence is Large ribosomal subunit protein uL2cy (276 aa).

Disordered regions lie at residues 1 to 25 (MAIH…VKSN) and 225 to 276 (MNPV…RRSK). Residues 7–25 (KTSTPSTRNGTVDSQVKSN) show a composition bias toward polar residues.

It belongs to the universal ribosomal protein uL2 family. In terms of assembly, part of the 50S ribosomal subunit.

It localises to the plastid. The protein resides in the chloroplast. This Coffea arabica (Arabian coffee) protein is Large ribosomal subunit protein uL2cy (rpl2-B).